The following is a 96-amino-acid chain: Small ribosomal subunit protein bS6 (96 aa).

The protein belongs to the bacterial ribosomal protein bS6 family.

Binds together with bS18 to 16S ribosomal RNA. In Bacillus cereus (strain ATCC 10987 / NRS 248), this protein is Small ribosomal subunit protein bS6.